We begin with the raw amino-acid sequence, 324 residues long: Short-chain dehydrogenase/reductase iacJ (324 aa).

Ile-42, Lys-66, Asp-93, Asn-120, Tyr-204, Lys-208, and Thr-239 together coordinate NADP(+). The active-site Proton donor is Tyr-204. The active-site Lowers pKa of active site Tyr is Lys-208.

This sequence belongs to the short-chain dehydrogenases/reductases (SDR) family.

It functions in the pathway secondary metabolite biosynthesis. Functionally, short-chain dehydrogenase/reductase; part of the gene cluster that mediates the biosynthesis of iso-A82775C, a enylepoxycyclohexane and biosynthetic precursor of the chloropestolide anticancer natural products. Within the cluster, the prenyltransferase iacE prenylates siccayne to generate pestalodiol E, using dimethylallyl diphosphate (DMAPP) as cosubstrate. The probable oxidoreductase iacF is then involved in the epoxidation of pestalodiol F to pestalodiol F, which is further converted to pestalofone A by the short-chain dehydrogenase/reductase iacG. Iso-A82775C is subsequently generated from pestalofone A by the short-chain dehydrogenase/reductase iacC. Iso-A82775C is further condensed with maldoxin via a Diels-Alder reaction to produce the anticancer natural products chloropestolides A to E. In Pestalotiopsis fici (strain W106-1 / CGMCC3.15140), this protein is Short-chain dehydrogenase/reductase iacJ.